Here is a 248-residue protein sequence, read N- to C-terminus: 3-deoxy-manno-octulosonate cytidylyltransferase (248 aa).

It belongs to the KdsB family.

It is found in the cytoplasm. It catalyses the reaction 3-deoxy-alpha-D-manno-oct-2-ulosonate + CTP = CMP-3-deoxy-beta-D-manno-octulosonate + diphosphate. Its pathway is nucleotide-sugar biosynthesis; CMP-3-deoxy-D-manno-octulosonate biosynthesis; CMP-3-deoxy-D-manno-octulosonate from 3-deoxy-D-manno-octulosonate and CTP: step 1/1. It functions in the pathway bacterial outer membrane biogenesis; lipopolysaccharide biosynthesis. In terms of biological role, activates KDO (a required 8-carbon sugar) for incorporation into bacterial lipopolysaccharide in Gram-negative bacteria. This chain is 3-deoxy-manno-octulosonate cytidylyltransferase, found in Chlorobium chlorochromatii (strain CaD3).